We begin with the raw amino-acid sequence, 286 residues long: Protein WVD2-like 1 (286 aa).

The interval 31 to 101 (ETDEEFEVKE…ENKKHIDDED (71 aa)) is disordered. Threonine 32 bears the Phosphothreonine mark. The segment covering 38-47 (VKECTEEKSL) has biased composition (basic and acidic residues). A coiled-coil region spans residues 131–182 (AQRAEKRKEYYQKLEEKNQALEAERNELEQRQKDEQEAALKQLRKNLKFKAK). The disordered stretch occupies residues 186–286 (NFYYEAPPAK…KPVNESSEEA (101 aa)). The segment covering 234 to 247 (TVSNRNRHSTGTVQ) has biased composition (polar residues).

It belongs to the TPX2 family.

It is found in the cytoplasm. Its subcellular location is the cytoskeleton. Functionally, microtubule-associated protein (MAP) that regulates the orientation of interphase cortical microtubules. Modulates both rotational polarity and anisotropic cell expansion during organ growth. Promotes clockwise root and etiolated hypocotyls coiling, clockwise leaf curling, but left-handed petiole twisting. This chain is Protein WVD2-like 1 (WDL1), found in Arabidopsis thaliana (Mouse-ear cress).